The chain runs to 198 residues: ATP-dependent Clp protease proteolytic subunit (198 aa).

Ser98 acts as the Nucleophile in catalysis. Residue His123 is part of the active site.

Belongs to the peptidase S14 family. Fourteen ClpP subunits assemble into 2 heptameric rings which stack back to back to give a disk-like structure with a central cavity, resembling the structure of eukaryotic proteasomes.

The protein resides in the cytoplasm. It catalyses the reaction Hydrolysis of proteins to small peptides in the presence of ATP and magnesium. alpha-casein is the usual test substrate. In the absence of ATP, only oligopeptides shorter than five residues are hydrolyzed (such as succinyl-Leu-Tyr-|-NHMec, and Leu-Tyr-Leu-|-Tyr-Trp, in which cleavage of the -Tyr-|-Leu- and -Tyr-|-Trp bonds also occurs).. Functionally, cleaves peptides in various proteins in a process that requires ATP hydrolysis. Has a chymotrypsin-like activity. Plays a major role in the degradation of misfolded proteins. The sequence is that of ATP-dependent Clp protease proteolytic subunit from Levilactobacillus brevis (strain ATCC 367 / BCRC 12310 / CIP 105137 / JCM 1170 / LMG 11437 / NCIMB 947 / NCTC 947) (Lactobacillus brevis).